Here is a 240-residue protein sequence, read N- to C-terminus: BLOC-1-related complex subunit 8 homolog (240 aa).

2 disordered regions span residues 1 to 33 and 163 to 240; these read MSSILKSSTGSNHSSTSNHSSINNISQLSGSHG and KTFS…EKIN. Composition is skewed to low complexity over residues 7-26 and 163-179; these read SSTGSNHSSTSNHSSINNIS and KTFSSFQQQHKIYQQQQ. The segment covering 180–190 has biased composition (polar residues); sequence TNLTPSKPTLS. A compositionally biased stretch (low complexity) spans 196–205; that stretch reads DNNNNNNNLN. Positions 208 to 240 are enriched in basic and acidic residues; sequence EKIEKEEKIEKEDEGKEKDEKEKDDKDLNEKIN. A coiled-coil region spans residues 211–239; that stretch reads EKEEKIEKEDEGKEKDEKEKDDKDLNEKI.

Belongs to the BORCS8 family.

It is found in the lysosome membrane. Functionally, may participate in the coupling of lysosomes to microtubule plus-end-directed kinesin motor. This is BLOC-1-related complex subunit 8 homolog from Dictyostelium discoideum (Social amoeba).